A 323-amino-acid chain; its full sequence is Olfactory receptor 1E2 (323 aa).

At 1–25 (MMGQNQTSISDFLLLGLPIQPEQQN) the chain is on the extracellular side. An N-linked (GlcNAc...) asparagine glycan is attached at Asn-5. The chain crosses the membrane as a helical span at residues 26–49 (LCYALFLAMYLTTLLGNLLIIVLI). Residues 50–57 (RLDSHLHT) lie on the Cytoplasmic side of the membrane. A helical transmembrane segment spans residues 58 to 79 (PVYLFLSNLSFSDLCFSSVTMP). Over 80–100 (KLLQNMQNQDPSIPYADCLTQ) the chain is Extracellular. The cysteines at positions 97 and 198 are disulfide-linked. A helical transmembrane segment spans residues 101–120 (MYFFLYFSDLESFLLVAMAY). At 121 to 148 (DRYVAICFPMHYTAICFLLHYTAIMSPM) the chain is on the cytoplasmic side. A helical transmembrane segment spans residues 149–167 (LCLSVVALSWVLTTFHAML). Over 168–205 (HTLLMARLCFCADNVIPHFFCDMSALLKLACSDTRVNE) the chain is Extracellular. The helical transmembrane segment at 206 to 228 (WVIFIMGGLILVIPFLLILGSYA) threads the bilayer. Residues 229–245 (RIVSSILKVPSSKGICK) lie on the Cytoplasmic side of the membrane. Residues 246–269 (AFSTCGSHLSVVSLFYGTVIGLYL) traverse the membrane as a helical segment. Residues 270 to 281 (CPSANSSTLKDT) are Extracellular-facing. N-linked (GlcNAc...) asparagine glycosylation is present at Asn-274. Residues 282-301 (VMAMMYTVVTPMLTPFIYSL) form a helical membrane-spanning segment. The Cytoplasmic portion of the chain corresponds to 302–323 (RNRDMKGALERVICKRKNPFLL).

Belongs to the G-protein coupled receptor 1 family.

It localises to the cell membrane. In terms of biological role, odorant receptor. The chain is Olfactory receptor 1E2 (OR1E2) from Homo sapiens (Human).